Here is a 96-residue protein sequence, read N- to C-terminus: Large ribosomal subunit protein bL28 (96 aa).

Belongs to the bacterial ribosomal protein bL28 family.

This chain is Large ribosomal subunit protein bL28, found in Parvibaculum lavamentivorans (strain DS-1 / DSM 13023 / NCIMB 13966).